A 473-amino-acid chain; its full sequence is Photosystem II CP43 reaction center protein (473 aa).

Positions 1-14 (MKTLYSLRRSYPVE) are excised as a propeptide. Thr-15 bears the N-acetylthreonine mark. A Phosphothreonine modification is found at Thr-15. 5 helical membrane-spanning segments follow: residues 69–93 (LFEV…PHLA), 134–155 (LIGP…KDKN), 178–200 (KALY…RKIT), 255–275 (KPFA…LSYS), and 291–312 (WFNN…ASQA). [CaMn4O5] cluster is bound at residue Glu-367. A helical transmembrane segment spans residues 447 to 471 (RARAAAAGFEKGIDRDTEPVLFMNP).

The protein belongs to the PsbB/PsbC family. PsbC subfamily. As to quaternary structure, PSII is composed of 1 copy each of membrane proteins PsbA, PsbB, PsbC, PsbD, PsbE, PsbF, PsbH, PsbI, PsbJ, PsbK, PsbL, PsbM, PsbT, PsbX, PsbY, PsbZ, Psb30/Ycf12, at least 3 peripheral proteins of the oxygen-evolving complex and a large number of cofactors. It forms dimeric complexes. The cofactor is Binds multiple chlorophylls and provides some of the ligands for the Ca-4Mn-5O cluster of the oxygen-evolving complex. It may also provide a ligand for a Cl- that is required for oxygen evolution. PSII binds additional chlorophylls, carotenoids and specific lipids..

Its subcellular location is the plastid. It is found in the chloroplast thylakoid membrane. In terms of biological role, one of the components of the core complex of photosystem II (PSII). It binds chlorophyll and helps catalyze the primary light-induced photochemical processes of PSII. PSII is a light-driven water:plastoquinone oxidoreductase, using light energy to abstract electrons from H(2)O, generating O(2) and a proton gradient subsequently used for ATP formation. The protein is Photosystem II CP43 reaction center protein of Zygnema circumcarinatum (Green alga).